The following is a 367-amino-acid chain: tRNA-specific 2-thiouridylase MnmA (367 aa).

ATP is bound by residues 11–18 (GLSGGVDS) and Leu-37. Cys-99 (nucleophile) is an active-site residue. An intrachain disulfide couples Cys-99 to Cys-195. Gly-123 is an ATP binding site. The segment at 145–147 (KDQ) is interaction with tRNA. Cys-195 functions as the Cysteine persulfide intermediate in the catalytic mechanism. The tract at residues 304 to 305 (RY) is interaction with tRNA.

It belongs to the MnmA/TRMU family.

The protein resides in the cytoplasm. The enzyme catalyses S-sulfanyl-L-cysteinyl-[protein] + uridine(34) in tRNA + AH2 + ATP = 2-thiouridine(34) in tRNA + L-cysteinyl-[protein] + A + AMP + diphosphate + H(+). Its function is as follows. Catalyzes the 2-thiolation of uridine at the wobble position (U34) of tRNA, leading to the formation of s(2)U34. In Chlorobium luteolum (strain DSM 273 / BCRC 81028 / 2530) (Pelodictyon luteolum), this protein is tRNA-specific 2-thiouridylase MnmA.